The chain runs to 346 residues: dTDP-glucose 4,6-dehydratase (346 aa).

NAD(+) is bound by residues 17-18 (FI), 38-41 (DKLT), 64-65 (DI), 86-90 (LAAES), and Thr105. Ser90 is a substrate binding site. Thr139 is a binding site for substrate. Catalysis depends on Asp140, which acts as the Proton donor. Residues Glu141 and Tyr165 each act as proton acceptor in the active site. NAD(+) is bound at residue 165–169 (YSASK). Asn194 contributes to the substrate binding site. Residue Asn195 coordinates NAD(+). Substrate-binding positions include 204-205 (KL), 220-222 (PVY), Arg229, Asn264, and 298-302 (DRPGH).

It belongs to the NAD(P)-dependent epimerase/dehydratase family. dTDP-glucose dehydratase subfamily. Homodimer. Requires NAD(+) as cofactor.

The enzyme catalyses dTDP-alpha-D-glucose = dTDP-4-dehydro-6-deoxy-alpha-D-glucose + H2O. Its pathway is carbohydrate biosynthesis; dTDP-L-rhamnose biosynthesis. It participates in bacterial outer membrane biogenesis; LPS O-antigen biosynthesis. Functionally, catalyzes the dehydration of dTDP-D-glucose to form dTDP-6-deoxy-D-xylo-4-hexulose via a three-step process involving oxidation, dehydration and reduction. This Neisseria gonorrhoeae protein is dTDP-glucose 4,6-dehydratase.